We begin with the raw amino-acid sequence, 208 residues long: MSAEPLIAGVDEVGRGALFGPVVAAVVVTVPSGFARLWELGVKDSKQLSPQKRQKLSRQIQRDFVCRIGYATVKEIDRLNIFHASLLAMSRAIGKLPLSPSLCWVDGKHIIKDLSIPQKAVIQGDQQSPVIAAASIVAKVWRDDLITRWHRRYPDYGLARHKGYGTAQHLEAIGNYGLTSQHRLSFSPCQPRLEHDCRTICPRVIEIS.

Residues 5-198 (PLIAGVDEVG…CQPRLEHDCR (194 aa)) form the RNase H type-2 domain. Residues Asp-11, Glu-12, and Asp-106 each coordinate a divalent metal cation.

The protein belongs to the RNase HII family. The cofactor is Mn(2+). It depends on Mg(2+) as a cofactor.

Its subcellular location is the cytoplasm. It carries out the reaction Endonucleolytic cleavage to 5'-phosphomonoester.. In terms of biological role, endonuclease that specifically degrades the RNA of RNA-DNA hybrids. This chain is Ribonuclease HII, found in Microcystis aeruginosa (strain NIES-843 / IAM M-2473).